Reading from the N-terminus, the 316-residue chain is Ribosomal RNA small subunit methyltransferase H (316 aa).

S-adenosyl-L-methionine contacts are provided by residues 35–37, aspartate 55, phenylalanine 84, aspartate 105, and glutamine 112; that span reads SGH.

The protein belongs to the methyltransferase superfamily. RsmH family.

The protein resides in the cytoplasm. The enzyme catalyses cytidine(1402) in 16S rRNA + S-adenosyl-L-methionine = N(4)-methylcytidine(1402) in 16S rRNA + S-adenosyl-L-homocysteine + H(+). Functionally, specifically methylates the N4 position of cytidine in position 1402 (C1402) of 16S rRNA. The sequence is that of Ribosomal RNA small subunit methyltransferase H from Streptococcus equi subsp. zooepidemicus (strain MGCS10565).